A 160-amino-acid chain; its full sequence is uncharacterized protein (160 aa).

Positions 69 to 145 form a coiled coil; the sequence is NQLLNMMAQA…EQREHVKEQR (77 aa). Disordered stretches follow at residues 82-109 and 129-160; these read GVRL…LKNA and KKKQ…HRGK. Basic residues predominate over residues 86–99; sequence QGRRQKKINPKRLQ. The segment covering 133 to 146 has biased composition (basic and acidic residues); the sequence is IMKEQREHVKEQRY. Over residues 147 to 160 the composition is skewed to basic residues; sequence MLKKQKAKKKHRGK.

This is an uncharacterized protein from Bacillus subtilis (strain 168).